A 730-amino-acid polypeptide reads, in one-letter code: 1,4-alpha-glucan branching enzyme GlgB (730 aa).

The Nucleophile role is filled by Asp405. The Proton donor role is filled by Glu458.

The protein belongs to the glycosyl hydrolase 13 family. GlgB subfamily. Monomer.

It carries out the reaction Transfers a segment of a (1-&gt;4)-alpha-D-glucan chain to a primary hydroxy group in a similar glucan chain.. Its pathway is glycan biosynthesis; glycogen biosynthesis. Catalyzes the formation of the alpha-1,6-glucosidic linkages in glycogen by scission of a 1,4-alpha-linked oligosaccharide from growing alpha-1,4-glucan chains and the subsequent attachment of the oligosaccharide to the alpha-1,6 position. This Haemophilus influenzae (strain PittGG) protein is 1,4-alpha-glucan branching enzyme GlgB.